The sequence spans 477 residues: Probable cytosolic Fe-S cluster assembly factor GK14772 (477 aa).

Positions 23, 69, 72, 75, 188, 244, 396, and 400 each coordinate [4Fe-4S] cluster.

The protein belongs to the NARF family.

Functionally, component of the cytosolic iron-sulfur (Fe/S) protein assembly machinery. Required for maturation of extramitochondrial Fe/S proteins. This is Probable cytosolic Fe-S cluster assembly factor GK14772 from Drosophila willistoni (Fruit fly).